A 243-amino-acid chain; its full sequence is Zinc import ATP-binding protein ZnuC (243 aa).

In terms of domain architecture, ABC transporter spans 4 to 219 (IAAHHLAVRR…PEYRALFGHG (216 aa)). An ATP-binding site is contributed by 36–43 (GPNGSGKS).

This sequence belongs to the ABC transporter superfamily. Zinc importer (TC 3.A.1.15.5) family. The complex is composed of two ATP-binding proteins (ZnuC), two transmembrane proteins (ZnuB) and a solute-binding protein (ZnuA).

The protein localises to the cell inner membrane. The enzyme catalyses Zn(2+)(out) + ATP(in) + H2O(in) = Zn(2+)(in) + ADP(in) + phosphate(in) + H(+)(in). Part of the ABC transporter complex ZnuABC involved in zinc import. Responsible for energy coupling to the transport system. The chain is Zinc import ATP-binding protein ZnuC from Cereibacter sphaeroides (strain ATCC 17023 / DSM 158 / JCM 6121 / CCUG 31486 / LMG 2827 / NBRC 12203 / NCIMB 8253 / ATH 2.4.1.) (Rhodobacter sphaeroides).